Consider the following 121-residue polypeptide: Large ribosomal subunit protein bL20 (121 aa).

The protein belongs to the bacterial ribosomal protein bL20 family.

In terms of biological role, binds directly to 23S ribosomal RNA and is necessary for the in vitro assembly process of the 50S ribosomal subunit. It is not involved in the protein synthesizing functions of that subunit. This chain is Large ribosomal subunit protein bL20, found in Sphingopyxis alaskensis (strain DSM 13593 / LMG 18877 / RB2256) (Sphingomonas alaskensis).